A 622-amino-acid chain; its full sequence is Glutamyl-tRNA(Gln) amidotransferase subunit B, mitochondrial (622 aa).

A mitochondrion-targeting transit peptide spans 1–54; it reads MSRIPTRELGRYLLQGQICQRGCVASSVSKSRAKQLGRHPLLPHDRHQPTQARH. The interval 30-67 is disordered; it reads KSRAKQLGRHPLLPHDRHQPTQARHAHTVTTTATPTQL. Residues 57–67 are compositionally biased toward low complexity; sequence TVTTTATPTQL.

The protein belongs to the GatB/GatE family. GatB subfamily. As to quaternary structure, subunit of the heterotrimeric GatCAB amidotransferase (AdT) complex, composed of A, B and C subunits.

Its subcellular location is the mitochondrion. The catalysed reaction is L-glutamyl-tRNA(Gln) + L-glutamine + ATP + H2O = L-glutaminyl-tRNA(Gln) + L-glutamate + ADP + phosphate + H(+). Its function is as follows. Allows the formation of correctly charged Gln-tRNA(Gln) through the transamidation of misacylated Glu-tRNA(Gln) in the mitochondria. The reaction takes place in the presence of glutamine and ATP through an activated gamma-phospho-Glu-tRNA(Gln). The sequence is that of Glutamyl-tRNA(Gln) amidotransferase subunit B, mitochondrial from Verticillium alfalfae (strain VaMs.102 / ATCC MYA-4576 / FGSC 10136) (Verticillium wilt of alfalfa).